Here is a 368-residue protein sequence, read N- to C-terminus: Peptide chain release factor 2 (368 aa).

At Q249 the chain carries N5-methylglutamine.

It belongs to the prokaryotic/mitochondrial release factor family. Methylated by PrmC. Methylation increases the termination efficiency of RF2.

The protein localises to the cytoplasm. In terms of biological role, peptide chain release factor 2 directs the termination of translation in response to the peptide chain termination codons UGA and UAA. The protein is Peptide chain release factor 2 of Rhodococcus jostii (strain RHA1).